Reading from the N-terminus, the 244-residue chain is Phosphoadenosine 5'-phosphosulfate reductase (244 aa).

Cys-239 acts as the Nucleophile; cysteine thiosulfonate intermediate in catalysis.

This sequence belongs to the PAPS reductase family. CysH subfamily.

The protein localises to the cytoplasm. It catalyses the reaction [thioredoxin]-disulfide + sulfite + adenosine 3',5'-bisphosphate + 2 H(+) = [thioredoxin]-dithiol + 3'-phosphoadenylyl sulfate. The protein operates within sulfur metabolism; hydrogen sulfide biosynthesis; sulfite from sulfate: step 3/3. Its function is as follows. Catalyzes the formation of sulfite from phosphoadenosine 5'-phosphosulfate (PAPS) using thioredoxin as an electron donor. The sequence is that of Phosphoadenosine 5'-phosphosulfate reductase from Klebsiella pneumoniae subsp. pneumoniae (strain ATCC 700721 / MGH 78578).